Here is a 694-residue protein sequence, read N- to C-terminus: Lamina-associated polypeptide 2, isoform alpha (694 aa).

The 44-residue stretch at 5-48 (LEDPSVLTKDKLKSELVANNVTLPAGEQRKDVYVQLYLQHLTAR) folds into the LEM-like domain. Disordered stretches follow at residues 47–117 (ARNR…ELTN) and 150–209 (REQG…FSEL). The segment at 49-108 (NRPPLPAGTNSKGPPDFSSDEEREPTPVLGSGAAAAGRSRAAVGRKATKKTDKPRQEDKD) is linker. The residue at position 57 (T57) is a Phosphothreonine. Phosphoserine is present on residues S59, S66, and S67. T74 is modified (phosphothreonine). Residues 78–93 (GSGAAAAGRSRAAVGR) are compositionally biased toward low complexity. Position 79 is a phosphoserine (S79). An omega-N-methylarginine mark is found at R86 and R88. Residues 97–106 (KKTDKPRQED) show a composition bias toward basic and acidic residues. Residues 107–117 (KDDLDVTELTN) are compositionally biased toward acidic residues. The region spanning 109 to 153 (DLDVTELTNEDLLDQLVKYGVNPGPIVGTTRKLYEKKLLKLREQG) is the LEM domain. T154 carries the post-translational modification Phosphothreonine. The span at 155 to 178 (ESRSSTPLPTISSSAENTRQNGSN) shows a compositional bias: polar residues. Phosphoserine is present on residues S156 and S159. Residues T160 and T164 each carry the phosphothreonine modification. Phosphoserine is present on residues S166 and S168. Residues 179 to 191 (DSDRYSDNEEGKK) show a composition bias toward basic and acidic residues. The short motif at 190 to 196 (KKKEHKK) is the Nuclear localization signal element. S272, S312, S351, S354, S370, and S424 each carry phosphoserine. Residues 338–368 (QPLCPERSHISDQSPLSSKRKALEESESSQL) form a disordered region. Positions 558–657 (TESCNQQLDL…VGRRYLWLKD (100 aa)) form a coiled coil. Position 656 is an N6-acetyllysine (K656).

Belongs to the LEM family. In terms of assembly, interacts with LMNA, BANF1 and RB1 and with chromosomes. Associates directly or indirectly with lamins at specific cell-cycle stages. Interacts with CMTM6. In terms of processing, phosphorylated in a mitose-specific manner. As to expression, expressed in many tissues. Most abundant in adult thymus and fetal liver.

Its subcellular location is the nucleus. The protein localises to the chromosome. Functionally, may be involved in the structural organization of the nucleus and in the post-mitotic nuclear assembly. Plays an important role, together with LMNA, in the nuclear anchorage of RB1. In terms of biological role, TP and TP5 may play a role in T-cell development and function. TP5 is an immunomodulating pentapeptide. This Homo sapiens (Human) protein is Lamina-associated polypeptide 2, isoform alpha (TMPO).